The following is a 535-amino-acid chain: T-box transcription factor TBX21 (535 aa).

The disordered stretch occupies residues 1 to 62; that stretch reads MGIVEPGCGD…SLGSPYPGGA (62 aa). A Phosphoserine modification is found at serine 53. Tyrosine 77 bears the Phosphotyrosine mark. The tract at residues 83–109 is disordered; the sequence is AAGFPGAGESFPPPADAEGYQPGEGYA. Tyrosine 118 is subject to Phosphotyrosine. The segment at residues 141–326 is a DNA-binding region (T-box); that stretch reads LNNHLLWSKF…NNPFAKGFRE (186 aa). Tyrosine 220 carries the post-translational modification Phosphotyrosine; by ABL1. Serine 225 is modified (phosphoserine). A Phosphotyrosine; by ABL1 modification is found at tyrosine 266. Threonine 303 is modified (phosphothreonine). At tyrosine 305 the chain carries Phosphotyrosine; by ABL1. A Glycyl lysine isopeptide (Lys-Gly) (interchain with G-Cter in ubiquitin) cross-link involves residue lysine 314. Residues 449–535 form a disordered region; that stretch reads RPMRTLPMEP…EGQFYNYFPN (87 aa). Residues 503–520 are compositionally biased toward low complexity; it reads SPYPSSGDSSSPAGAPSP. Serine 513 carries the post-translational modification Phosphoserine. Tyrosine 530 carries the phosphotyrosine; by ITK modification.

As to quaternary structure, interacts with RUNX1, RUNX3, ITK, ABL1, RELA, CDK9 and KDM6B. The phosphorylated form (at Thr-303) interacts with NFATC2. Interacts with SMARCA4 in a KDM6B-dependent manner. Interacts with CCTN1. Interacts with USP10. The phosphorylated form (at Tyr-530) interacts with GATA3. In terms of processing, phosphorylations at Ser-53, Tyr-77, Ser-225 and Ser-513 are regulated by mTORC1. Phosphorylation at Tyr-530 is essential for its interaction GATA3. Phosphorylation at Tyr-220, Tyr-266 and Tyr-305 enhances its transcriptional activator activity. Phosphorylation at Thr-303 is required for its interaction with NFATC2. Ubiquitinated at Lys-314, leading to its degradation by the proteasome. Ubiquitination is essential for controlling protein stability, binding to the T-box-binding element of the IFN-gamma promoter, and for interaction with NFATC2 through induction of phosphorylation at Thr-303. Deubiquitinated by USP10 leading to its stabilization. As to expression, T-cell specific.

It localises to the nucleus. In terms of biological role, lineage-defining transcription factor which initiates Th1 lineage development from naive Th precursor cells both by activating Th1 genetic programs and by repressing the opposing Th2 and Th17 genetic programs. Activates transcription of a set of genes important for Th1 cell function, including those encoding IFN-gamma and the chemokine receptor CXCR3. Induces permissive chromatin accessibilty and CpG methylation in IFNG. Activates IFNG and CXCR3 genes in part by recruiting chromatin remodeling complexes including KDM6B, a SMARCA4-containing SWI/SNF-complex, and an H3K4me2-methyltransferase complex to their promoters and all of these complexes serve to establish a more permissive chromatin state conducive with transcriptional activation. Can activate Th1 genes also via recruitment of Mediator complex and P-TEFb (composed of CDK9 and CCNT1/cyclin-T1) in the form of the super elongation complex (SEC) to super-enhancers and associated genes in activated Th1 cells. Inhibits the Th17 cell lineage commitment by blocking RUNX1-mediated transactivation of Th17 cell-specific transcriptinal regulator RORC. Inhibits the Th2 cell lineage commitment by suppressing the production of Th2 cytokines, such as IL-4, IL-5, and IL- 13, via repression of transcriptional regulators GATA3 and NFATC2. Protects Th1 cells from amplifying aberrant type-I IFN response in an IFN-gamma abundant microenvironment by acting as a repressor of type-I IFN transcription factors and type-I IFN-stimulated genes. Acts as a regulator of antiviral B-cell responses; controls chronic viral infection by promoting the antiviral antibody IgG2a isotype switching and via regulation of a broad antiviral gene expression program. Required for the correct development of natural killer (NK) and mucosal-associated invariant T (MAIT) cells. In Homo sapiens (Human), this protein is T-box transcription factor TBX21 (TBX21).